A 326-amino-acid chain; its full sequence is L-lactate dehydrogenase (326 aa).

Residues Val-20, Asp-41, Lys-46, Tyr-71, and 85-86 (GA) contribute to the NAD(+) site. 2 residues coordinate substrate: Gln-88 and Arg-94. NAD(+) is bound by residues Ser-107, 124–126 (AAN), and Ser-149. 126–129 (NPVD) provides a ligand contact to substrate. Position 154–157 (154–157 (DTAR)) interacts with substrate. Beta-D-fructose 1,6-bisphosphate contacts are provided by residues Arg-159, 171-174 (RSVH), and His-174. His-181 functions as the Proton acceptor in the catalytic mechanism. Tyr-226 bears the Phosphotyrosine mark. Thr-235 contributes to the substrate binding site.

It belongs to the LDH/MDH superfamily. LDH family. Homotetramer.

It localises to the cytoplasm. The enzyme catalyses (S)-lactate + NAD(+) = pyruvate + NADH + H(+). The protein operates within fermentation; pyruvate fermentation to lactate; (S)-lactate from pyruvate: step 1/1. Its activity is regulated as follows. Allosterically activated by fructose 1,6-bisphosphate (FBP) alone under acidic conditions, while it requires additional activation factors such as divalent cations (Mn(2+)) under neutral conditions. Under acidic conditions, Mn(2+) is an inhibitor in the absence of fructose 1,6-bisphosphate (FBP). In case of L.casei, L-LDH binds four fructose 1,6-bisphosphate (FBP) molecules per tetramer, while usual allosteric L-LDH binds only two fructose 1,6-bisphosphate (FBP) molecules per tetramer. Functionally, catalyzes the conversion of lactate to pyruvate. This chain is L-lactate dehydrogenase, found in Lacticaseibacillus casei (Lactobacillus casei).